A 472-amino-acid chain; its full sequence is Flotillin-like protein 6 (472 aa).

The S-palmitoyl cysteine moiety is linked to residue C37. A coiled-coil region spans residues 237–327; it reads ENQREAEVAQ…ELYKKQKEAE (91 aa).

The protein belongs to the band 7/mec-2 family. Flotillin subfamily. In terms of processing, may be palmitoylated. As to expression, very low occasional expression in roots and nodules.

Its subcellular location is the cell membrane. It is found in the membrane. The protein resides in the caveola. In terms of biological role, may act as a scaffolding protein within caveolar membranes, functionally participating in formation of caveolae or caveolae-like vesicles. May be involved in nodule formation. The chain is Flotillin-like protein 6 (FLOT6) from Medicago truncatula (Barrel medic).